Reading from the N-terminus, the 447-residue chain is Tubulin beta chain (447 aa).

GTP is bound by residues Q11, E69, S138, G142, T143, G144, N204, and N226. E69 serves as a coordination point for Mg(2+). Residues 424–447 (QYQDAGVDEEEEEYEEEAPLEGEE) form a disordered region. A compositionally biased stretch (acidic residues) spans 429 to 447 (GVDEEEEEYEEEAPLEGEE).

The protein belongs to the tubulin family. As to quaternary structure, dimer of alpha and beta chains. A typical microtubule is a hollow water-filled tube with an outer diameter of 25 nm and an inner diameter of 15 nM. Alpha-beta heterodimers associate head-to-tail to form protofilaments running lengthwise along the microtubule wall with the beta-tubulin subunit facing the microtubule plus end conferring a structural polarity. Microtubules usually have 13 protofilaments but different protofilament numbers can be found in some organisms and specialized cells. Requires Mg(2+) as cofactor.

Its subcellular location is the cytoplasm. It is found in the cytoskeleton. Its function is as follows. Tubulin is the major constituent of microtubules, a cylinder consisting of laterally associated linear protofilaments composed of alpha- and beta-tubulin heterodimers. Microtubules grow by the addition of GTP-tubulin dimers to the microtubule end, where a stabilizing cap forms. Below the cap, tubulin dimers are in GDP-bound state, owing to GTPase activity of alpha-tubulin. The sequence is that of Tubulin beta chain (tub-2) from Neurospora crassa (strain ATCC 24698 / 74-OR23-1A / CBS 708.71 / DSM 1257 / FGSC 987).